Consider the following 752-residue polypeptide: DNA ligase (752 aa).

The segment at 1–25 is disordered; sequence MKRNGFVPSNSVGRRGIPSNSTSSA. NAD(+)-binding positions include 91-95, 140-141, and Glu170; these read DADFD and SL. The N6-AMP-lysine intermediate role is filled by Lys172. The NAD(+) site is built by Arg193, Glu233, Lys350, and Lys374. Zn(2+) contacts are provided by Cys474, Cys477, Cys493, and Cys499. In terms of domain architecture, BRCT spans 669–752; the sequence is STPRTLAGLT…TLLDGGPAAL (84 aa).

The protein belongs to the NAD-dependent DNA ligase family. LigA subfamily. Requires Mg(2+) as cofactor. Mn(2+) serves as cofactor.

The catalysed reaction is NAD(+) + (deoxyribonucleotide)n-3'-hydroxyl + 5'-phospho-(deoxyribonucleotide)m = (deoxyribonucleotide)n+m + AMP + beta-nicotinamide D-nucleotide.. Its function is as follows. DNA ligase that catalyzes the formation of phosphodiester linkages between 5'-phosphoryl and 3'-hydroxyl groups in double-stranded DNA using NAD as a coenzyme and as the energy source for the reaction. It is essential for DNA replication and repair of damaged DNA. The protein is DNA ligase of Nocardioides sp. (strain ATCC BAA-499 / JS614).